The sequence spans 280 residues: uncharacterized protein (280 aa).

7 consecutive transmembrane segments (helical) span residues 6–26, 38–58, 79–99, 105–125, 144–164, 171–191, and 231–251; these read YLVIILIIAGVISVLAFTPLV, VLAIVLFVYVFFGRQIIYLFP, IFLLDLCPFFAVIAPVFVFLK, GVLAVFGLFGALVTLFGELIF, NQIYFMMHFLSLLVSLAIILW, ISFFYIHVFALIYFSYVALMV, and LVFIVGFSLSYVAILLMTLFA.

It is found in the cell membrane. This is an uncharacterized protein from Mycoplasma genitalium (strain ATCC 33530 / DSM 19775 / NCTC 10195 / G37) (Mycoplasmoides genitalium).